Here is a 191-residue protein sequence, read N- to C-terminus: Leucyl/phenylalanyl-tRNA--protein transferase (191 aa).

This sequence belongs to the L/F-transferase family.

It localises to the cytoplasm. The enzyme catalyses N-terminal L-lysyl-[protein] + L-leucyl-tRNA(Leu) = N-terminal L-leucyl-L-lysyl-[protein] + tRNA(Leu) + H(+). The catalysed reaction is N-terminal L-arginyl-[protein] + L-leucyl-tRNA(Leu) = N-terminal L-leucyl-L-arginyl-[protein] + tRNA(Leu) + H(+). It carries out the reaction L-phenylalanyl-tRNA(Phe) + an N-terminal L-alpha-aminoacyl-[protein] = an N-terminal L-phenylalanyl-L-alpha-aminoacyl-[protein] + tRNA(Phe). Functionally, functions in the N-end rule pathway of protein degradation where it conjugates Leu, Phe and, less efficiently, Met from aminoacyl-tRNAs to the N-termini of proteins containing an N-terminal arginine or lysine. In Nostoc sp. (strain PCC 7120 / SAG 25.82 / UTEX 2576), this protein is Leucyl/phenylalanyl-tRNA--protein transferase.